Reading from the N-terminus, the 267-residue chain is Phosphate import ATP-binding protein PstB 2 (267 aa).

The ABC transporter domain maps to 21–262 (LSTKDLHVYY…AKLQSTSDYV (242 aa)). 53–60 (GPSGCGKS) contacts ATP.

It belongs to the ABC transporter superfamily. Phosphate importer (TC 3.A.1.7) family. In terms of assembly, the complex is composed of two ATP-binding proteins (PstB), two transmembrane proteins (PstC and PstA) and a solute-binding protein (PstS).

The protein resides in the cell membrane. It carries out the reaction phosphate(out) + ATP + H2O = ADP + 2 phosphate(in) + H(+). In terms of biological role, part of the ABC transporter complex PstSACB involved in phosphate import. Responsible for energy coupling to the transport system. In Streptococcus mutans serotype c (strain ATCC 700610 / UA159), this protein is Phosphate import ATP-binding protein PstB 2.